A 430-amino-acid chain; its full sequence is Trigger factor (430 aa).

The 86-residue stretch at 157–242 (GDLVALETWS…AVEVSEPVLP (86 aa)) folds into the PPIase FKBP-type domain.

This sequence belongs to the FKBP-type PPIase family. Tig subfamily.

It is found in the cytoplasm. The catalysed reaction is [protein]-peptidylproline (omega=180) = [protein]-peptidylproline (omega=0). Its function is as follows. Involved in protein export. Acts as a chaperone by maintaining the newly synthesized protein in an open conformation. Functions as a peptidyl-prolyl cis-trans isomerase. In Xanthomonas oryzae pv. oryzae (strain PXO99A), this protein is Trigger factor.